The primary structure comprises 444 residues: Multidrug resistance protein MdtA (444 aa).

The first 20 residues, 1–20 (MKSQSKRTSRLFVFVGGVVA), serve as a signal peptide directing secretion. Over residues 37 to 52 (NNTSGAQQSARGQDTS) the composition is skewed to polar residues. Disordered stretches follow at residues 37–60 (NNTS…RNTP) and 398–444 (TPRS…AEKS). The span at 406 to 419 (ANPASAEKAAAEAE) shows a compositional bias: low complexity. Residues 435–444 (ARSTTAAEKS) are compositionally biased toward polar residues.

Belongs to the membrane fusion protein (MFP) (TC 8.A.1) family. Part of a tripartite efflux system composed of MdtA, MdtB and MdtC.

The protein resides in the cell inner membrane. The sequence is that of Multidrug resistance protein MdtA from Yersinia pseudotuberculosis serotype O:1b (strain IP 31758).